The following is a 385-amino-acid chain: Putative type I restriction enzyme specificity subunit S.HindORF215P (385 aa).

This sequence belongs to the type-I restriction system S methylase family.

A putative specificity subunit for a type I restriction enzyme; the corresponding endonuclease and methylase subunits have multiple frameshifts and are probably not expressed. In Haemophilus influenzae (strain ATCC 51907 / DSM 11121 / KW20 / Rd), this protein is Putative type I restriction enzyme specificity subunit S.HindORF215P.